Here is a 580-residue protein sequence, read N- to C-terminus: Protein O-linked-mannose beta-1,4-N-acetylglucosaminyltransferase 2 (580 aa).

The Cytoplasmic segment spans residues methionine 1 to serine 4. A helical; Signal-anchor for type II membrane protein membrane pass occupies residues alanine 5–leucine 25. Residues arginine 26–threonine 580 are Lumenal-facing. 2 N-linked (GlcNAc...) asparagine glycosylation sites follow: asparagine 99 and asparagine 276. A Fibronectin type-III domain is found at alanine 488–threonine 580.

Belongs to the glycosyltransferase 61 family.

It is found in the endoplasmic reticulum membrane. The enzyme catalyses 3-O-(alpha-D-mannosyl)-L-threonyl-[protein] + UDP-N-acetyl-alpha-D-glucosamine = 3-O-(N-acetyl-beta-D-glucosaminyl-(1-&gt;4)-alpha-D-mannosyl)-L-threonyl-[protein] + UDP + H(+). It participates in protein modification; protein glycosylation. O-linked mannose beta-1,4-N-acetylglucosaminyltransferase that transfers UDP-N-acetyl-D-glucosamine to the 4-position of the mannose to generate N-acetyl-D-glucosamine-beta-1,4-O-D-mannosylprotein. Involved in the biosynthesis of the phosphorylated O-mannosyl trisaccharide (N-acetylgalactosamine-beta-3-N-acetylglucosamine-beta-4-(phosphate-6-)mannose), a carbohydrate structure present in alpha-dystroglycan (DAG1), which is required for binding laminin G-like domain-containing extracellular proteins with high affinity. The sequence is that of Protein O-linked-mannose beta-1,4-N-acetylglucosaminyltransferase 2 (POMGNT2) from Pan troglodytes (Chimpanzee).